Consider the following 370-residue polypeptide: Mesoderm posterior protein 2 (370 aa).

3 disordered regions span residues 51-89 (PSQP…EREK), 231-265 (SLER…HWTQ), and 325-350 (TSED…GLQL). A compositionally biased stretch (low complexity) spans 57–77 (PARSTRTTQATAPRRTRPAPA). Residues 79 to 133 (GQRQSASEREKLRMRTLARALQELRRFLPPSVAPAGQSLTKIETLRLAIRYIGHL) enclose the bHLH domain. A compositionally biased stretch (polar residues) spans 325–334 (TSEDQGSSPA). A may contain a degradation domain region spans residues 326-330 (SEDQG).

Degraded by the proteasome. In terms of processing, phosphorylated.

The protein localises to the nucleus. Functionally, transcription factor with important role in somitogenesis. Defines the rostrocaudal patterning of the somite by participating in distinct Notch pathways. Also regulates the FGF signaling pathway. Specifies the rostral half of the somites. Generates rostro-caudal polarity of somites by down-regulating in the presumptive rostral domain DLL1, a Notch ligand. Participates in the segment border formation by activating in the anterior presomitic mesoderm LFNG, a negative regulator of DLL1-Notch signaling. Acts as a strong suppressor of Notch activity. Together with MESP1 is involved in the epithelialization of somitic mesoderm and in the development of cardiac mesoderm. May play a role with Tcf15 in the differentiation of myotomal and sclerotomal cells by regulating Pax family genes. Also controls the expression of the protocadherin PCDH8/PAPC, EPHA4, RIPPLY2, NOTCH2, FGFR1, and CER1. Binds to the E-boxes within the EPH4A and RIPPLY2 enhancers. The polypeptide is Mesoderm posterior protein 2 (Mesp2) (Mus musculus (Mouse)).